A 235-amino-acid polypeptide reads, in one-letter code: Large ribosomal subunit protein uL1 (235 aa).

Belongs to the universal ribosomal protein uL1 family. In terms of assembly, part of the 50S ribosomal subunit.

Its function is as follows. Binds directly to 23S rRNA. The L1 stalk is quite mobile in the ribosome, and is involved in E site tRNA release. In terms of biological role, protein L1 is also a translational repressor protein, it controls the translation of the L11 operon by binding to its mRNA. The chain is Large ribosomal subunit protein uL1 from Mycobacterium bovis (strain ATCC BAA-935 / AF2122/97).